Reading from the N-terminus, the 601-residue chain is Elongation factor 4 (601 aa).

The region spanning 5-187 (SNIRNFSIIA…AIVERLPAPE (183 aa)) is the tr-type G domain. GTP contacts are provided by residues 17–22 (DHGKST) and 134–137 (NKID).

This sequence belongs to the TRAFAC class translation factor GTPase superfamily. Classic translation factor GTPase family. LepA subfamily.

Its subcellular location is the cell inner membrane. The enzyme catalyses GTP + H2O = GDP + phosphate + H(+). Required for accurate and efficient protein synthesis under certain stress conditions. May act as a fidelity factor of the translation reaction, by catalyzing a one-codon backward translocation of tRNAs on improperly translocated ribosomes. Back-translocation proceeds from a post-translocation (POST) complex to a pre-translocation (PRE) complex, thus giving elongation factor G a second chance to translocate the tRNAs correctly. Binds to ribosomes in a GTP-dependent manner. This is Elongation factor 4 from Oleidesulfovibrio alaskensis (strain ATCC BAA-1058 / DSM 17464 / G20) (Desulfovibrio alaskensis).